Reading from the N-terminus, the 305-residue chain is Fumarylacetoacetate hydrolase domain-containing protein 2 homolog (305 aa).

Residues Glu-141, Glu-143, and Asp-172 each contribute to the a divalent metal cation site.

Belongs to the FAH family. The cofactor is Ca(2+). Mg(2+) serves as cofactor.

In terms of biological role, may have hydrolase activity. The chain is Fumarylacetoacetate hydrolase domain-containing protein 2 homolog (fahd2) from Dictyostelium discoideum (Social amoeba).